We begin with the raw amino-acid sequence, 236 residues long: Protein-L-isoaspartate O-methyltransferase 1 (236 aa).

Ser-85 is an active-site residue.

The protein belongs to the methyltransferase superfamily. L-isoaspartyl/D-aspartyl protein methyltransferase family.

The protein resides in the cytoplasm. It carries out the reaction [protein]-L-isoaspartate + S-adenosyl-L-methionine = [protein]-L-isoaspartate alpha-methyl ester + S-adenosyl-L-homocysteine. Catalyzes the methyl esterification of L-isoaspartyl residues in peptides and proteins that result from spontaneous decomposition of normal L-aspartyl and L-asparaginyl residues. It plays a role in the repair and/or degradation of damaged proteins. In Polaromonas sp. (strain JS666 / ATCC BAA-500), this protein is Protein-L-isoaspartate O-methyltransferase 1.